Consider the following 91-residue polypeptide: Small ribosomal subunit protein bS20 (91 aa).

Residues 1-18 (MPLHKSAEKRLRQSDRKN) are compositionally biased toward basic and acidic residues. The segment at 1–25 (MPLHKSAEKRLRQSDRKNARNRARK) is disordered.

The protein belongs to the bacterial ribosomal protein bS20 family.

Its function is as follows. Binds directly to 16S ribosomal RNA. The chain is Small ribosomal subunit protein bS20 from Chlorobium phaeovibrioides (strain DSM 265 / 1930) (Prosthecochloris vibrioformis (strain DSM 265)).